We begin with the raw amino-acid sequence, 229 residues long: Protein GLC8 (229 aa).

Disordered regions lie at residues 1–21 (MGGI…QQDP), 35–62 (TQKN…EIIG), and 107–229 (QFQD…TKEP). A Phosphoserine modification is found at Ser12. Over residues 107 to 117 (QFQDIHIDEPK) the composition is skewed to basic and acidic residues. Thr118 is subject to Phosphothreonine; by PHO85. Ser158 is subject to Phosphoserine. The span at 164-173 (FEIKENKQPD) shows a compositional bias: basic and acidic residues. The span at 175-184 (ETNDENDEDS) shows a compositional bias: acidic residues. Residue Ser184 is modified to Phosphoserine. Over residues 185–196 (PEARHKKFEEMR) the composition is skewed to basic and acidic residues.

Phosphorylated by the cyclin-CDKs PCL6-PHO85 and PCL7-PHO85. Phosphorylation of Thr-118 inactivates GLC8.

Modulator of GLC7 type-1 protein phosphatase. The chain is Protein GLC8 (GLC8) from Saccharomyces cerevisiae (strain ATCC 204508 / S288c) (Baker's yeast).